The sequence spans 449 residues: Probable secreted beta-glucosidase ARB_04747 (449 aa).

The N-terminal stretch at 1–21 (MKFSSGILSLAVAASVQSVQA) is a signal peptide. An N-linked (GlcNAc...) asparagine glycan is attached at asparagine 57. The tract at residues 96–185 (SPPACPAPSY…RPFPDGEIDC (90 aa)) is disordered. Positions 98–125 (PACPAPSYVPSPPAAPSSPPAAPQPPSK) are enriched in pro residues. Residues 131-150 (EEPKKPEEPKKPEGPKKPEG) are compositionally biased toward basic and acidic residues.

It belongs to the SUN family.

Its subcellular location is the secreted. The protein localises to the cell wall. Functionally, cell surface beta-glucosidase involved in cytokinesis, cell wall biogenesis, adhesion to host tissue; thus playing an important role in the host-pathogen interaction. Has hydrolytic activity on linear (1-&gt;3)-beta-D-glucans such as laminaribiose and other laminarioligosaccharides. The polypeptide is Probable secreted beta-glucosidase ARB_04747 (Arthroderma benhamiae (strain ATCC MYA-4681 / CBS 112371) (Trichophyton mentagrophytes)).